The sequence spans 398 residues: O-methyltransferase mpaG' (398 aa).

Position 144 (Ser144) interacts with (4E,8E)-10-(4,6-dihydroxy-7-methyl-3-oxo-1,3-dihydro-2-benzofuran-5-yl)-4,8-dimethyldeca-4,8-dienoate. Ser144 is a 4-farnesyl-3,5-dihydroxy-6-methylphthalide binding site. Ser144 is a 6-O-desmethylmycophenolate binding site. Asn197 is a binding site for S-adenosyl-L-homocysteine. Tyr199 provides a ligand contact to (4E,8E)-10-(4,6-dihydroxy-7-methyl-3-oxo-1,3-dihydro-2-benzofuran-5-yl)-4,8-dimethyldeca-4,8-dienoate. Residue Tyr199 coordinates 4-farnesyl-3,5-dihydroxy-6-methylphthalide. Tyr199 is a 6-O-desmethylmycophenolate binding site. Positions 203, 237, 239, 244, 245, 264, and 265 each coordinate S-adenosyl-L-homocysteine. Asp264 contacts S-adenosyl-L-methionine. (4E,8E)-10-(4,6-dihydroxy-7-methyl-3-oxo-1,3-dihydro-2-benzofuran-5-yl)-4,8-dimethyldeca-4,8-dienoate contacts are provided by Arg265 and Gln267. Position 265 (Arg265) interacts with 6-O-desmethylmycophenolate. The S-adenosyl-L-homocysteine site is built by Asp286, Ile287, and His302. Position 303 (Ser303) interacts with (4E,8E)-10-(4,6-dihydroxy-7-methyl-3-oxo-1,3-dihydro-2-benzofuran-5-yl)-4,8-dimethyldeca-4,8-dienoate. Ser303 contacts 4-farnesyl-3,5-dihydroxy-6-methylphthalide. Position 303 (Ser303) interacts with 6-O-desmethylmycophenolate. His306 (proton acceptor) is an active-site residue. Catalysis depends on residues Glu335 and Glu362.

It belongs to the class I-like SAM-binding methyltransferase superfamily. Cation-independent O-methyltransferase family. As to quaternary structure, homodimer.

Its subcellular location is the cytoplasm. The protein resides in the cytosol. The catalysed reaction is (4E,8E)-10-(4,6-dihydroxy-7-methyl-3-oxo-1,3-dihydro-2-benzofuran-5-yl)-4,8-dimethyldeca-4,8-dienoate + S-adenosyl-L-methionine = (4E,8E)-10-(4-hydroxy-6-methoxy-7-methyl-3-oxo-1,3-dihydro-2-benzofuran-5-yl)-4,8-dimethyldeca-4,8-dienoate + S-adenosyl-L-homocysteine + H(+). It carries out the reaction 4-farnesyl-3,5-dihydroxy-6-methylphthalide + S-adenosyl-L-methionine = 4-farnesyl-3,5-dihydroxy-6-methoxylphthalide + S-adenosyl-L-homocysteine + H(+). It catalyses the reaction 6-O-desmethylmycophenolate + S-adenosyl-L-methionine = mycophenolate + S-adenosyl-L-homocysteine + H(+). It participates in secondary metabolite biosynthesis; terpenoid biosynthesis. Functionally, O-methyltransferase; part of the gene cluster that mediates the biosynthesis of mycophenolic acid (MPA), the first isolated antibiotic natural product in the world obtained from a culture of Penicillium brevicompactum in 1893. MpaG' catalyzes the 5-O-methylation of three precursors in MPA biosynthesis including demethylmycophenolic acid (DMMPA), 4-farnesyl-3,5-dihydroxy-6-methylphthalide (FDHMP), and an intermediate containing three fewer carbon atoms compared to FDHMP (FDHMP-3C) with different catalytic efficiencies. The first step of the pathway is the synthesis of 5-methylorsellinic acid (5MOA) by the cytosolic polyketide synthase mpaC. 5MOA is then converted to the phthalide compound 5,7-dihydroxy-4,6-dimethylphthalide (DHMP) by the endoplasmic reticulum-bound cytochrome P450 monooxygenase mpaDE. MpaDE first catalyzes hydroxylation of 5-MOA to 4,6-dihydroxy-2-(hydroxymethyl)-3-methylbenzoic acid (DHMB). MpaDE then acts as a lactone synthase that catalyzes the ring closure to convert DHMB into DHMP. The next step is the prenylation of DHMP by the Golgi apparatus-associated prenyltransferase mpaA to yield farnesyl-DHMP (FDHMP). The ER-bound oxygenase mpaB then mediates the oxidative cleavage the C19-C20 double bond in FDHMP to yield FDHMP-3C via a mycophenolic aldehyde intermediate. The O-methyltransferase mpaG catalyzes the methylation of FDHMP-3C to yield MFDHMP-3C. MpaG and mpaB can also switch the order in which they act and, in this case, the conversion of FDHMP to MFDHMP-3C can take place via 5-O-methyl-FDHMP (MFDHMP). After the cytosolic methylation of FDHMP-3C, MFDHMP-3C enters into peroxisomes probably via free diffusion due to its low molecular weight. Upon a peroxisomal CoA ligation reaction, catalyzed by a beta-oxidation component enzyme acyl-CoA ligase ACL891, MFDHMP-3C-CoA would then be restricted to peroxisomes for the following beta-oxidation pathway steps. The peroxisomal beta-oxidation machinery than converts MFDHMP-3C-CoA into MPA_CoA, via a beta-oxidation chain-shortening process. Finally mpaH acts as a peroxisomal acyl-CoA hydrolase with high substrate specificity toward MPA-CoA to release the final product MPA. MpaH can also hydrolyze DMMPA-CoA to release demethylmycophenolic acid (DMMPA) that is further converted to MPA by mpaG. The polypeptide is O-methyltransferase mpaG' (Penicillium brevicompactum).